The sequence spans 3232 residues: MRCMLSYRDQFMSESQARHLAATMRVVLSSIASAPQQSLADVDMCSSLDYQTLSRWNLKSPVMMEVCVHDLVQQNCCSRPTCQAVASWDGCLTYDEMSILSSHLAQRLRAAGVKPGVFVALCLDRCKWAVIGILAVLKAGGAFCALDSSYPVSRLQDMCRDLEITIVLTVKTNIQHASPLADTVILLDDDLYSESALSSAQKCASRSSLSPHDPVYAVFTSGSTGKPKGIIMEHASFSACALSSMEPLHIGPQDRVLHFASYAFDLSLFEILAPLIAGATVVIPSEKARLENLPCAMTDLGATWAFLTPTVARLYRPTQMPTLKTLCLGGEAVNASDIKSWSSKNLISGYNPAECCPLGISGLLNDHMPRALGSTFPSQMAWIVDPEDHEKLLPVGAIGELAIEGPVVARGYVHDLKSSDSSTPFVVKTPTWLCRFRSNINRSNRIYLTGDLARQDCDDGSVHYLGRKDDQVKIHGQRVELAEIEQHIEQHFSSLATKAVVMLLRPISGRTVLTALVMPHQRLENGEKTSNSLLMELADINQDFRATLALAASKLRLALPSHMVPSVYLPIRHFPTTKGGKIDRGHLQSLLLSLPPEYLYGSEEATTHQGEEPKSDREKLLQGCFAQALDLPRTRIDLDSNFFQLGGDSLSAMKLLALALEEGISSIAYQDIFSHPTLREIVIVSTSATSREPLSSETVETPPFSLIKDPEMLIQIASEQCGSGVGKADIEDIYPCTHLQQSLMASTAHNPNAYVAILAFKLKSGVDRTRLERAWHIACSGHTILRTRLVQTDTGDCYQVVVKQPPHWTETNEVSDDGSTDSLLRTSFGLGRPLIQSHLSTDQLFVAMHHALYDGWSLPMLIGELDLAYRELSVRRLPCLKNYVKYTMDSADAAASFWQAELQDADPVHFPAPSSLDYKPQPCAAMTVSVPLVNSPRRNVTLATEIQFAWAMTVYTYTGCKDVIFGLISSGRAAPVAQIESILGPTFACTPLRVSIDPQGKLGEALDDLQYTIVEQSMFVHFGAQAIRQLGPNAAAACNFQTVLAVEADGPETGEEEGSWFTRYDFLSDVASFSSYALTLRCKLSTRGVEINAVYDKLMVDERQMGRILAQFEHILTQIHSNETVHDDIGGLDKLSVSDWRQLQAWNIDLPPAHPKGLGAHQAIQAKCQAQPDATAIDAWDGCVTYGELERRAEKLAGLVRSHVSKPDQVVVLYFSKSWLTVVAQLAVLKAGAAFITLEISQPVHYLQRVISALGPVLVLTSEDLFSAAEDLQENAVPVMAVDKDDLSDATARTSQASSSACTVECDLMYIIATSGTTGMPKIVMTDHQAFMTNASPLMNGLGITSDSRVFQFCGYSFDLLIVEHFLTLLAGGCICIPSLHNRNNRFAASIVELEANWVGSPSSVLQLLDPQTVPTVKTIMQAGERLQQGLVDRWASHVRLINAYGPAECSVGALARDTVRPDTDDVQNLGFATGSVCWIVNAETSEKLLPVPIGAEGELIIEGHTLSRGYLGDADKTNASFLRLPNWLRDFRADRGQSQGHRVYLTGDIVRQNSDGSMSFVRRKDAQVKIRGQRVELTDVEHQVERCFIGAHQVVTDIVQIPNSQSSILVALVLTKDAMTNHKQQESLLDQKSAGGLSILAPTSSFTANANAAETALQDRMPAYMVPDLFVPVSDLPREASGKIGRKAIKQYLASLTQQDWSRYSSTRKVPPSNATEHEISAIWARVLQIEPHTFGVHDSFFRLGGDSISGMQVAAACGVAGISVTVKDMFEYRTIRKLALARGETQQLTVGTTSTVSNASGIRQKKALHPFYPEGRLEVYMERMQSRLGQAIERIYPCSPIQQGILMSHARNPHHYDEVIQWKVAGDVSCDISRMQRAWREVVSRHGILRTLFLQVSEDSFLDQVVLKNYSPDISVCTNEEDVEPYRPFEDSVPMHHLLVFQRSADDVTVHLRIHHALVDGLSLHIIRRDLELAYQERLDELAQPPGYHEYISYLQEKRSRKSLQEYWSSYLQGATGSLFPAVQDEPASDGQYFGAVEIELGSIAKLTQFCEEHKLGVTVVLHVVWAVIVQRYAATDEVCFGYMTSGRHVPVTNVENVVGPLFNMLIGRVKLAYHLSVLSTMYAYQENFINSLDHQHQSLVETLHSIGSSAGDLFNTLITVVNDQPEDHVSQSALRLVGDSVQSRSEYPITLNILNHADKIKMQLSYHTSLLSGVSANTIAKAFRFVLQRTLEQPHELLRALPVLDEDQMNIVFAQNRCMPPQVDDFIHDTIHQQCLRCPDSPSVCAWDGNFTYRQLDDLSSALSEEIVRKGAGPEVTIPIVLEKTRWTPVAILAVLKSGSSFVLMDSTHPAARVGSIVQAIGPPVIIVSAQTRSKVATFSTDVVEVGDWLAREVPFEKQQGTRQTGLLKATNAAYLVFTSGSTGKPKGAIVEHASLSTAAKYMASRLHIDSASRVLQFSSHAWDIPVTEVLVTLRMGGCVCVPSEEERTGNLAKASERMKVNWALWTPTVARLFKPEEFPHLKTLVFAGEALSATDLETWCDRVRLVQGYGPAECSLISTVTDPLTRSDNPRCIGLPSGCVAWVVNRDNHELLAPPGATGELVLEGPIVGRGYLGDPGRAASAFISPPAWLMRLRGSGSSNRLYKTGDLVRQHVSSGLLTFVGRNDDQVKVRGQRVEPGEVEGQVAQVFPGSQVIVLVVKKSAGAVLAALVLQNGEDRSSAGETANLFPPPSLAFAALAKAAFSKLRETMPTYMIPSIMLPISYLPKAATGKADRNLLRDRVASLSDGEIEAYVAASVSHRPASTAMEAELQRLVGQVLQRPLHSISLDEDLFRLGMDSLTAMTLASAARRRGWEVSVPIIFQHSRVSDLARIVEQGQHGISSRAQLEEDRVVLNKRLVSLLPEICTKWDLREDQITHIAPTTYYQHMALASDHEAFFGLYFSKPVASEALKAAASRVVKLHSILRTAFVPLEDTYVQLTLCDFDLPSQEIQTNEAEVSAAMELFCRDAADKTAGFGVPVTKLILMLDRQGDCLSLLLRLQRAQFDGVSVMRIMADWRSALEHASCSWEPAPSLDYADFALARVAQNTPDVFGMWRDVLQGSSMTYLVPQQEYISMTDRGHAERLVTSSCDIPLPEPAPGYTMATVAKAAWAICLARETESEDLLFLQLVRNRHLALDGIDKMVGCSLNYVPVRVPLRRDWKISDLLHWLHQQHIRTMAGDTATGRCRG.

Residues Gly90–Ile474 form an adenylation (A) domain 1 region. Positions Arg617–Thr686 constitute a Carrier 1 domain. Ser649 carries the post-translational modification O-(pantetheine 4'-phosphoryl)serine. Positions Glu731–Asn1122 are condensation (C) domain 1. An adenylation (A) domain 2 region spans residues Gln1165–Arg1572. The region spanning Thr1717–Gly1785 is the Carrier 2 domain. An O-(pantetheine 4'-phosphoryl)serine modification is found at Ser1749. Positions Glu1835–Met2252 are condensation (C) domain 2. The segment at Gln2276–Arg2675 is adenylation (A) domain 3. A Carrier 3 domain is found at Met2810 to Glu2878. Residue Ser2842 is modified to O-(pantetheine 4'-phosphoryl)serine. Positions Leu2943–Ile3218 are cyclization (Cyc) domain.

Belongs to the NRP synthetase family.

Its pathway is alkaloid biosynthesis; ergot alkaloid biosynthesis. Its function is as follows. D-lysergyl-peptide-synthetase subunit 1; part of the gene cluster that mediates the biosynthesis of fungal ergot alkaloid. DmaW catalyzes the first step of ergot alkaloid biosynthesis by condensing dimethylallyl diphosphate (DMAP) and tryptophan to form 4-dimethylallyl-L-tryptophan. The second step is catalyzed by the methyltransferase easF that methylates 4-dimethylallyl-L-tryptophan in the presence of S-adenosyl-L-methionine, resulting in the formation of 4-dimethylallyl-L-abrine. The catalase easC and the FAD-dependent oxidoreductase easE then transform 4-dimethylallyl-L-abrine to chanoclavine-I which is further oxidized by easD in the presence of NAD(+), resulting in the formation of chanoclavine-I aldehyde. Agroclavine dehydrogenase easG then mediates the conversion of chanoclavine-I aldehyde to agroclavine via a non-enzymatic adduct reaction: the substrate is an iminium intermediate that is formed spontaneously from chanoclavine-I aldehyde in the presence of glutathione. The presence of easA is not required to complete this reaction. Further conversion of agroclavine to paspalic acid is a two-step process involving oxidation of agroclavine to elymoclavine and of elymoclavine to paspalic acid, the second step being performed by the elymoclavine oxidase cloA. Paspalic acid is then further converted to D-lysergic acid. Ergopeptines are assembled from D-lysergic acid and three different amino acids by the D-lysergyl-peptide-synthetases composed each of a monomudular and a trimodular nonribosomal peptide synthetase subunit. LpsB and lpsC encode the monomodular subunits responsible for D-lysergic acid activation and incorporation into the ergopeptine backbone. LpsA1 and A2 subunits encode the trimodular nonribosomal peptide synthetase assembling the tripeptide portion of ergopeptines. LpsA1 is responsible for formation of the major ergopeptine, ergotamine, and lpsA2 for alpha-ergocryptine, the minor ergopeptine of the total alkaloid mixture elaborated by C.purpurea. D-lysergyl-tripeptides are assembled by the nonribosomal peptide synthetases and released as N-(D-lysergyl-aminoacyl)-lactams. Cyclolization of the D-lysergyl-tripeptides is performed by the Fe(2+)/2-ketoglutarate-dependent dioxygenase easH which introduces a hydroxyl group into N-(D-lysergyl-aminoacyl)-lactam at alpha-C of the aminoacyl residue followed by spontaneous condensation with the terminal lactam carbonyl group. The protein is D-lysergyl-peptide-synthetase subunit 1 of Claviceps purpurea (Ergot fungus).